Here is a 281-residue protein sequence, read N- to C-terminus: Acetyl-coenzyme A carboxylase carboxyl transferase subunit beta (281 aa).

Positions 23–281 (IWTKCGSCQA…SLLVKLHYKN (259 aa)) constitute a CoA carboxyltransferase N-terminal domain. 4 residues coordinate Zn(2+): C27, C30, C46, and C49. The segment at 27-49 (CGSCQAVLYKSELEKLQEVCPKC) adopts a C4-type zinc-finger fold.

It belongs to the AccD/PCCB family. Acetyl-CoA carboxylase is a heterohexamer composed of biotin carboxyl carrier protein (AccB), biotin carboxylase (AccC) and two subunits each of ACCase subunit alpha (AccA) and ACCase subunit beta (AccD). Zn(2+) is required as a cofactor.

The protein resides in the cytoplasm. It carries out the reaction N(6)-carboxybiotinyl-L-lysyl-[protein] + acetyl-CoA = N(6)-biotinyl-L-lysyl-[protein] + malonyl-CoA. It functions in the pathway lipid metabolism; malonyl-CoA biosynthesis; malonyl-CoA from acetyl-CoA: step 1/1. Component of the acetyl coenzyme A carboxylase (ACC) complex. Biotin carboxylase (BC) catalyzes the carboxylation of biotin on its carrier protein (BCCP) and then the CO(2) group is transferred by the transcarboxylase to acetyl-CoA to form malonyl-CoA. In Alteromonas mediterranea (strain DSM 17117 / CIP 110805 / LMG 28347 / Deep ecotype), this protein is Acetyl-coenzyme A carboxylase carboxyl transferase subunit beta.